Reading from the N-terminus, the 675-residue chain is Protein C-mannosyl-transferase DPY19L1 (675 aa).

The disordered stretch occupies residues 1-22; the sequence is MEGRPPPEGRPPPRPRTGRAPR. 11 helical membrane-spanning segments follow: residues 66–88, 156–176, 186–208, 236–254, 260–279, 286–303, 309–325, 334–354, 414–434, 449–469, and 491–511; these read LYYSYFKTIVEAPSFLNGVWMIM, ACFYVAVIFILNGLMMALFFI, LGGLVTVLCFFFNHGECTRVMWT, LYRGSLIALCISNVFFMLP, FVLLTQIASLFAVYVVGYID, IIYIHMISLALCFVLMFG, TSYYASSLVIIWGILAM, VSELSLWVIQGCFWLFGTVIL, VVLVVFVAIVRKIISDMWGVL, GELVYHALQLLAYTALGILIM, and LFGWLFCKVHPGAIVFAILAA.

It belongs to the dpy-19 family. Widely expressed.

It is found in the endoplasmic reticulum membrane. It carries out the reaction L-tryptophyl-[protein] + a di-trans,poly-cis-dolichyl beta-D-mannosyl phosphate = C-alpha-D-mannosyl-L-tryptophyl-[protein] + a di-trans,poly-cis-dolichyl phosphate + H(+). It functions in the pathway protein modification; protein glycosylation. C-mannosyltransferase that mediates the C-mannosylation tryptophan residues on target proteins. The reaction occurs on the luminal side of the endoplasmic reticulum and involves the transfer of a mannose unit from a dolichylphosphate mannose (Dol-P-Man) donor to an acceptor protein containing a WxxW consensus sequence. C-mannosylates the first two tryptophans in the WxxWxxWxxC motif in thrombospondin (TSP) type-1 of UNC5A. Regulates neurite extension during development. The polypeptide is Protein C-mannosyl-transferase DPY19L1 (DPY19L1) (Homo sapiens (Human)).